The primary structure comprises 750 residues: Dual specificity tyrosine-phosphorylation-regulated kinase 1A (750 aa).

Disordered stretches follow at residues 56 to 81 (ALPY…RDPA) and 104 to 129 (YAKK…KVYN). A Bipartite nuclear localization signal motif is present at residues 109–126 (RRHQQGQGDDSSHKKERK). Residues 151–471 (YEIDSLIGKG…PYYALQHSFF (321 aa)) enclose the Protein kinase domain. Residues 157-165 (IGKGSFGQV), Lys180, and 230-233 (FEML) contribute to the ATP site. Asp279 (proton acceptor) is an active-site residue. Disordered stretches follow at residues 400–434 (TKDG…AGES), 477–531 (EGTN…RHSG), 583–666 (SQKN…GNQA), and 731–750 (DRED…VASS). Positions 477–493 (EGTNTSNSVSTSPAMEQ) are enriched in polar residues. A compositionally biased stretch (low complexity) spans 494–517 (SQSSGTTSSTSSSSGGSSGTSNSG). The histidine-rich domain (HRD) stretch occupies residues 584–612 (QKNVPHHHGNGSHHHHHHHHHHHGQHILS). Residues 587–608 (VPHHHGNGSHHHHHHHHHHHGQ) are compositionally biased toward basic residues. A compositionally biased stretch (polar residues) spans 610-621 (ILSNRTRTRIYN). Residues 622–659 (SPSTSSSTQDSMDIGNSHHSMTSLSSSTTSSSTSSSST) are compositionally biased toward low complexity. Over residues 741 to 750 (CVQQSPVASS) the composition is skewed to polar residues.

It belongs to the protein kinase superfamily. CMGC Ser/Thr protein kinase family. MNB/DYRK subfamily. In terms of processing, autophosphorylated on tyrosine residues.

It localises to the nucleus. The protein localises to the nucleus speckle. It catalyses the reaction L-seryl-[protein] + ATP = O-phospho-L-seryl-[protein] + ADP + H(+). The catalysed reaction is L-threonyl-[protein] + ATP = O-phospho-L-threonyl-[protein] + ADP + H(+). It carries out the reaction L-tyrosyl-[protein] + ATP = O-phospho-L-tyrosyl-[protein] + ADP + H(+). The enzyme catalyses [DNA-directed RNA polymerase] + ATP = phospho-[DNA-directed RNA polymerase] + ADP + H(+). In terms of biological role, dual-specificity kinase which possesses both serine/threonine and tyrosine kinase activities. Exhibits a substrate preference for proline at position P+1 and arginine at position P-3. Plays an important role in double-strand breaks (DSBs) repair following DNA damage. Mechanistically, phosphorylates RNF169 and increases its ability to block accumulation of TP53BP1 at the DSB sites thereby promoting homologous recombination repair (HRR). Also acts as a positive regulator of transcription by acting as a CTD kinase that mediates phosphorylation of the CTD (C-terminal domain) of the large subunit of RNA polymerase II (RNAP II) POLR2A. Modulates alternative splicing by phosphorylating the splice factor SRSF6. Phosphorylates SEPTIN4, SEPTIN5 and SF3B1. The polypeptide is Dual specificity tyrosine-phosphorylation-regulated kinase 1A (Xenopus laevis (African clawed frog)).